A 97-amino-acid polypeptide reads, in one-letter code: Mitochondrial import inner membrane translocase subunit Tim8 A (97 aa).

The short motif at Cys-43 to Cys-66 is the Twin CX3C motif element. 2 disulfides stabilise this stretch: Cys-43-Cys-66 and Cys-47-Cys-62. Phosphoserine is present on residues Ser-57, Ser-87, Ser-94, and Ser-96.

This sequence belongs to the small Tim family. Heterohexamer; composed of 3 copies of TIMM8A and 3 copies of TIMM13, named soluble 70 kDa complex. Associates with the TIM22 complex, whose core is composed of TIMM22. In terms of tissue distribution, present at high level in liver and brain, and at lower level in muscle and heart. In CNS sections, it is predominantly present in the soma and the dendritic portion of the Purkinje cells of the cerebellum, but not in the glial cells. Scattered expression also is also detected in the brain stem, olfactory bulb, substantia nigra, hippocampus and striatum (at protein level). Ubiquitously expressed.

Its subcellular location is the mitochondrion inner membrane. Functionally, mitochondrial intermembrane chaperone that participates in the import and insertion of some multi-pass transmembrane proteins into the mitochondrial inner membrane. Also required for the transfer of beta-barrel precursors from the TOM complex to the sorting and assembly machinery (SAM complex) of the outer membrane. Acts as a chaperone-like protein that protects the hydrophobic precursors from aggregation and guide them through the mitochondrial intermembrane space. The TIMM8-TIMM13 complex mediates the import of proteins such as TIMM23, SLC25A12/ARALAR1 and SLC25A13/ARALAR2, while the predominant TIMM9-TIMM10 70 kDa complex mediates the import of much more proteins. The protein is Mitochondrial import inner membrane translocase subunit Tim8 A (Timm8a1) of Mus musculus (Mouse).